The following is a 339-amino-acid chain: Probable protein phosphatase 2C 28 (339 aa).

One can recognise a PPM-type phosphatase domain in the interval 87–334 (DHGYHLVKGQ…DDISCVVVSF (248 aa)). D124, G125, D286, and D325 together coordinate Mn(2+).

It belongs to the PP2C family. It depends on Mg(2+) as a cofactor. The cofactor is Mn(2+).

It catalyses the reaction O-phospho-L-seryl-[protein] + H2O = L-seryl-[protein] + phosphate. The enzyme catalyses O-phospho-L-threonyl-[protein] + H2O = L-threonyl-[protein] + phosphate. The protein is Probable protein phosphatase 2C 28 of Arabidopsis thaliana (Mouse-ear cress).